A 338-amino-acid polypeptide reads, in one-letter code: Fructose-1,6-bisphosphatase class 1 (338 aa).

Mg(2+)-binding residues include Glu91, Asp113, Leu115, and Asp116. Residues 116 to 119, Asn208, and Lys274 each bind substrate; that span reads DGSS. Residue Glu280 participates in Mg(2+) binding.

The protein belongs to the FBPase class 1 family. As to quaternary structure, homotetramer. Mg(2+) serves as cofactor.

The protein localises to the cytoplasm. It carries out the reaction beta-D-fructose 1,6-bisphosphate + H2O = beta-D-fructose 6-phosphate + phosphate. It functions in the pathway carbohydrate biosynthesis; gluconeogenesis. This chain is Fructose-1,6-bisphosphatase class 1, found in Ralstonia pickettii (strain 12J).